A 56-amino-acid polypeptide reads, in one-letter code: Large ribosomal subunit protein bL32 (56 aa).

A disordered region spans residues 1-26 (MAVQKSKVTRSRRGQRRSHDALTAAA). Positions 7-16 (KVTRSRRGQR) are enriched in basic residues.

It belongs to the bacterial ribosomal protein bL32 family.

This Moritella marina (Vibrio marinus) protein is Large ribosomal subunit protein bL32 (rpmF).